Here is a 560-residue protein sequence, read N- to C-terminus: RNA polymerase-associated protein C651.09c (560 aa).

2 disordered regions span residues 15–74 (DDSD…KNPY) and 128–207 (YMAQ…KVEQ). Residues 148–171 (GKRDKLTELKKRRQERSARSVSER) show a composition bias toward basic and acidic residues. The span at 180–195 (DYEEQNESEKSEEEEG) shows a compositional bias: acidic residues. Ser-197 carries the phosphoserine modification. The Plus3 domain maps to 214-345 (SANLYDLNAI…KLNDLRDMSK (132 aa)). Positions 387 to 456 (AGNAELVKEI…RRRLSAAATA (70 aa)) form a coiled coil. Residues 440–449 (EQRMNEERRR) are compositionally biased toward basic and acidic residues. The tract at residues 440 to 486 (EQRMNEERRRLSAAATATPMSAPTSVLTGTSPQPSPSLSTSIMSTPK) is disordered. Positions 451–480 (SAAATATPMSAPTSVLTGTSPQPSPSLSTS) are enriched in low complexity. 2 positions are modified to phosphoserine: Ser-502 and Ser-506.

As to quaternary structure, component of the PAF1 complex.

The protein resides in the nucleus. It localises to the nucleoplasm. In terms of biological role, the PAF1 complex is a multifunctional complex. Involved in transcription initiation via genetic interactions with TATA-binding proteins. Involved in elongation. Also has a role in transcription-coupled histone modification. Important for TATA site selection by TBP. Directly or indirectly regulates the DNA-binding properties of the TATA box-binding protein, and the relative activities of different TATA elements. This is RNA polymerase-associated protein C651.09c from Schizosaccharomyces pombe (strain 972 / ATCC 24843) (Fission yeast).